The chain runs to 373 residues: Ca(2+)/H(+) antiporter (373 aa).

11 helical membrane-spanning segments follow: residues 6 to 26 (TIFF…WLHW), 29 to 49 (VSIF…MGEA), 61 to 81 (LGGL…AFIA), 94 to 114 (ITGS…LLGG), 134 to 154 (MNLA…SNGI), 162 to 182 (LSVA…LFSM), 220 to 240 (FWLG…ELLV), 249 to 269 (SLGL…GNAA), 291 to 311 (VGST…AGWI), 318 to 338 (LDFN…ANSI), and 349 to 369 (GSLL…HPVV).

Belongs to the Ca(2+):cation antiporter (CaCA) (TC 2.A.19) family. Cation/proton exchanger (CAX) subfamily.

Its subcellular location is the cell inner membrane. Functionally, ca(+)/H(+) antiporter that extrudes calcium in exchange for external protons. Plays an important role in salt tolerance. Does not transport sodium or lithium. The polypeptide is Ca(2+)/H(+) antiporter (Aphanothece halophytica).